A 343-amino-acid polypeptide reads, in one-letter code: Glyceraldehyde-3-phosphate dehydrogenase (343 aa).

NAD(+) is bound by residues 11–12 and Gly110; that span reads TI. 139 to 141 provides a ligand contact to D-glyceraldehyde 3-phosphate; it reads SCN. Cys140 serves as the catalytic Nucleophile. Residue Arg168 participates in NAD(+) binding. A D-glyceraldehyde 3-phosphate-binding site is contributed by 194–195; the sequence is HG. Gln301 is an NAD(+) binding site.

It belongs to the glyceraldehyde-3-phosphate dehydrogenase family. As to quaternary structure, homotetramer.

The protein localises to the cytoplasm. The enzyme catalyses D-glyceraldehyde 3-phosphate + phosphate + NADP(+) = (2R)-3-phospho-glyceroyl phosphate + NADPH + H(+). It carries out the reaction D-glyceraldehyde 3-phosphate + phosphate + NAD(+) = (2R)-3-phospho-glyceroyl phosphate + NADH + H(+). It functions in the pathway carbohydrate degradation; glycolysis; pyruvate from D-glyceraldehyde 3-phosphate: step 1/5. This is Glyceraldehyde-3-phosphate dehydrogenase from Methanoregula boonei (strain DSM 21154 / JCM 14090 / 6A8).